Here is a 316-residue protein sequence, read N- to C-terminus: Epoxide hydrolase 3 (316 aa).

Residues Pro-25–Pro-302 enclose the AB hydrolase-1 domain. Residue Asp-101 is the Nucleophile of the active site. Tyr-150 serves as a coordination point for an epoxide. Tyr-230 (proton donor) is an active-site residue. His-295 acts as the Proton acceptor in catalysis.

Belongs to the AB hydrolase superfamily. Epoxide hydrolase family. As to quaternary structure, homodimer. In terms of tissue distribution, highly expressed in young fruits 15 days after anthesis (15-DAA).

It catalyses the reaction an epoxide + H2O = an ethanediol. It carries out the reaction (24S)-24,25-epoxycucurbitadienol + H2O = (24R)-24,25-dihydroxycucurbitadienol. It participates in secondary metabolite biosynthesis; terpenoid biosynthesis. Epoxide hydrolase involved in the biosynthesis of cucurbitacin and mogroside tetracyclic triterpene natural products (e.g. siamenoside I and mogrosides IV, V and VI). Cucurbitacins have cytotoxic properties and exhibit deterrent taste as a defense barrier against herbivores. Mogrosides are nonsugar highly oxygenated compounds used as high-intensity zero-calorie sweeteners; they also possess pharmacological properties such as regulating immunity, lowering blood sugar and lipid levels, protecting the liver, and acting as antioxidants and antitumor agents. Catalyzes the hydrolysis of aromatic epoxide-containing substrates, such as the conversion of 24,25-epoxycucurbitadienol to 24,25-dihydroxycucurbitadienol. The chain is Epoxide hydrolase 3 from Siraitia grosvenorii (Monk's fruit).